The following is a 200-amino-acid chain: MAEPGLEGSQPVDLSKHPSGIVPTLQNIVSTVNLDCKLDLKAIALQARNAEYNPKRFAAVIMRIREPKTTALIFASGKMVCTGAKSEQQSKLAARKYARIIQKLGFPAKFKDFKIQNIVGSCDVKFPIRLEGLAYSHGAFSSYEPELFPGLIYRMKQPKIVLLIFVSGKIVLTGAKVREETYTAFENIYPVLSEFRKIQQ.

A run of 2 repeats spans residues 25 to 101 (LQNI…ARII) and 115 to 192 (IQNI…YPVL).

It belongs to the TBP family. As to quaternary structure, belongs to the TFIID complex together with the TBP-associated factors (TAFs). Binds DNA as monomer.

The protein localises to the nucleus. General transcription factor that functions at the core of the DNA-binding multiprotein factor TFIID. Binding of TFIID to the TATA box is the initial transcriptional step of the pre-initiation complex (PIC), playing a role in the activation of eukaryotic genes transcribed by RNA polymerase II. The polypeptide is TATA-box-binding protein 2 (TBP2) (Zea mays (Maize)).